The chain runs to 543 residues: Chaperonin GroEL (543 aa).

Residues 30–33, K51, 87–91, G415, 479–481, and D495 each bind ATP; these read TLGP, DGTTT, and NAA.

Belongs to the chaperonin (HSP60) family. Forms a cylinder of 14 subunits composed of two heptameric rings stacked back-to-back. Interacts with the co-chaperonin GroES.

The protein localises to the cytoplasm. It catalyses the reaction ATP + H2O + a folded polypeptide = ADP + phosphate + an unfolded polypeptide.. In terms of biological role, together with its co-chaperonin GroES, plays an essential role in assisting protein folding. The GroEL-GroES system forms a nano-cage that allows encapsulation of the non-native substrate proteins and provides a physical environment optimized to promote and accelerate protein folding. In Francisella philomiragia subsp. philomiragia (strain ATCC 25017 / CCUG 19701 / FSC 153 / O#319-036), this protein is Chaperonin GroEL.